We begin with the raw amino-acid sequence, 206 residues long: RNA pyrophosphohydrolase (206 aa).

One can recognise a Nudix hydrolase domain in the interval Gly-6–Arg-149. Positions Gly-38 to Gly-59 match the Nudix box motif. A disordered region spans residues Met-175 to Thr-206.

It belongs to the Nudix hydrolase family. RppH subfamily. A divalent metal cation is required as a cofactor.

In terms of biological role, accelerates the degradation of transcripts by removing pyrophosphate from the 5'-end of triphosphorylated RNA, leading to a more labile monophosphorylated state that can stimulate subsequent ribonuclease cleavage. The sequence is that of RNA pyrophosphohydrolase from Stenotrophomonas maltophilia (strain R551-3).